The following is a 1485-amino-acid chain: Chromosome partition protein MukB (1485 aa).

34-41 (GGNGAGKS) serves as a coordination point for ATP. 2 coiled-coil regions span residues 337–480 (LNLV…QAYQ) and 509–605 (QHLA…PVWL). A flexible hinge region spans residues 666–783 (PSGAEDARLI…EVPLFGRAAR (118 aa)). 2 coiled-coil regions span residues 835–915 (EAEI…IQQH) and 977–1116 (GMLT…AKAG).

It belongs to the SMC family. MukB subfamily. Homodimerization via its hinge domain. Binds to DNA via its C-terminal region. Interacts, and probably forms a ternary complex, with MukE and MukF via its C-terminal region. The complex formation is stimulated by calcium or magnesium. Interacts with tubulin-related protein FtsZ.

Its subcellular location is the cytoplasm. The protein resides in the nucleoid. Functionally, plays a central role in chromosome condensation, segregation and cell cycle progression. Functions as a homodimer, which is essential for chromosome partition. Involved in negative DNA supercoiling in vivo, and by this means organize and compact chromosomes. May achieve or facilitate chromosome segregation by condensation DNA from both sides of a centrally located replisome during cell division. The polypeptide is Chromosome partition protein MukB (Yersinia pseudotuberculosis serotype IB (strain PB1/+)).